The chain runs to 339 residues: Glycerol-3-phosphate dehydrogenase [NAD(P)+] (339 aa).

NADPH is bound by residues Ser15, Tyr16, His36, and Lys110. Residues Lys110, Gly139, and Thr141 each coordinate sn-glycerol 3-phosphate. Ala143 is a binding site for NADPH. 5 residues coordinate sn-glycerol 3-phosphate: Lys195, Asp248, Ser258, Arg259, and Asn260. Lys195 (proton acceptor) is an active-site residue. An NADPH-binding site is contributed by Arg259. NADPH contacts are provided by Val283 and Glu285.

Belongs to the NAD-dependent glycerol-3-phosphate dehydrogenase family.

It is found in the cytoplasm. The enzyme catalyses sn-glycerol 3-phosphate + NAD(+) = dihydroxyacetone phosphate + NADH + H(+). It carries out the reaction sn-glycerol 3-phosphate + NADP(+) = dihydroxyacetone phosphate + NADPH + H(+). Its pathway is membrane lipid metabolism; glycerophospholipid metabolism. Functionally, catalyzes the reduction of the glycolytic intermediate dihydroxyacetone phosphate (DHAP) to sn-glycerol 3-phosphate (G3P), the key precursor for phospholipid synthesis. This is Glycerol-3-phosphate dehydrogenase [NAD(P)+] from Shigella dysenteriae serotype 1 (strain Sd197).